A 282-amino-acid polypeptide reads, in one-letter code: MAASLSFFSSSIFLSNPNIQSSKHLLFRSPKQLSVAAIATIRSEVATIPILSFDGAEVGSTTLNLKSAPLDTARAVVHRGLTTDLRNQRRGTASTLTRSEVRGGGIKPYPQKKTGRARRGSNRTPLRPGGGVVFGPKPKDWSVKINKKEKRLAISTALSSASENTIVVEEFNDKFEKPKTKEFIDLMRRWGLDPKEKSLFLMTDVSDNVILSSRNIGTLKMLTPRTLNLFDILDSEKLVLTKSAVDFLNERYGDENEWEDEEEDDQEDNDGGEAEESTESSE.

The transit peptide at 1-43 directs the protein to the chloroplast; the sequence is MAASLSFFSSSIFLSNPNIQSSKHLLFRSPKQLSVAAIATIRS. Disordered stretches follow at residues 86–133 and 251–282; these read RNQR…GGVV and RYGD…ESSE. Over residues 255–282 the composition is skewed to acidic residues; the sequence is ENEWEDEEEDDQEDNDGGEAEESTESSE.

Belongs to the universal ribosomal protein uL4 family. In terms of assembly, part of the 50S ribosomal subunit.

It localises to the plastid. The protein resides in the chloroplast. In terms of biological role, this protein binds directly and specifically to 23S rRNA. May play a role in plastid transcriptional regulation. In Nicotiana tabacum (Common tobacco), this protein is Large ribosomal subunit protein uL4c (RPL4).